Here is a 1118-residue protein sequence, read N- to C-terminus: Sodium-driven chloride bicarbonate exchanger (1118 aa).

4 disordered regions span residues 1 to 23, 58 to 96, 245 to 312, and 457 to 476; these read MEIK…EEAV, GRKS…DTPS, KQSE…PPHQ, and NGTA…GPEL. Residues 1-509 lie on the Cytoplasmic side of the membrane; sequence MEIKDQGAQM…DFRDAFSLQC (509 aa). Residues 59-76 are compositionally biased toward basic residues; it reads RKSHRRHRHRGHKHRKRD. The span at 77-90 shows a compositional bias: basic and acidic residues; the sequence is RERDSGLEDGRESP. Residue Ser89 is modified to Phosphoserine. At Thr94 the chain carries Phosphothreonine. Over residues 248 to 264 the composition is skewed to polar residues; that stretch reads EPNSMDKNAGQVVSPQS. The residue at position 276 (Ser276) is a Phosphoserine. The helical transmembrane segment at 510-530 threads the bilayer; sequence LASFLFLYCACMSPVITFGGL. Topologically, residues 531 to 538 are extracellular; sequence LGEATEGR. Residues 539-559 traverse the membrane as a helical segment; it reads ISAIESLFGASMTGIAYSLFG. The Cytoplasmic portion of the chain corresponds to 560-562; it reads GQP. A helical membrane pass occupies residues 563–583; it reads LTILGSTGPVLVFEKILFKFC. Residues 584-596 are Extracellular-facing; that stretch reads KEYGLSYLSLRAS. A helical membrane pass occupies residues 597-617; the sequence is IGLWTATLCIILVATDASSLV. Over 618–626 the chain is Cytoplasmic; that stretch reads CYITRFTEE. A helical transmembrane segment spans residues 627–647; the sequence is AFASLICIIFIYEALEKLFEL. At 648 to 720 the chain is on the extracellular side; it reads SEAYPINMHN…VGRACGHDHP (73 aa). N-linked (GlcNAc...) asparagine glycosylation is found at Asn674, Asn677, Asn687, and Asn697. A helical transmembrane segment spans residues 721 to 741; the sequence is YVPDVLFWSVILFFSTVTLSA. The Cytoplasmic portion of the chain corresponds to 742-762; the sequence is TLKQFKTSRYFPTKVRSIVSD. The chain crosses the membrane as a helical span at residues 763-783; the sequence is FAVFLTILCMVLIDYAIGIPS. The Extracellular segment spans residues 784-809; it reads PKLQVPSVFKPTRDDRGWFVTPLGPN. A helical membrane pass occupies residues 810 to 830; it reads PWWTVIAAIIPALLCTILIFM. Over 831–855 the chain is Cytoplasmic; that stretch reads DQQITAVIINRKEHKLKKGCGYHLD. A helical transmembrane segment spans residues 856-876; it reads LLMVAVMLGVCSIMGLPWFVA. At 877–912 the chain is on the extracellular side; that stretch reads ATVLSITHVNSLKLESECSAPGEQPKFLGIREQRVT. The helical transmembrane segment at 913–933 threads the bilayer; the sequence is GLMIFILMGSSVFMTSILKFI. Topologically, residues 934–935 are cytoplasmic; the sequence is PM. The chain crosses the membrane as a helical span at residues 936 to 956; that stretch reads PVLYGVFLYMGASSLKGIQFF. At 957–998 the chain is on the extracellular side; that stretch reads DRIKLFWMPAKHQPDFIYLRHVPLRKVHLFTIIQMSCLGLLW. The chain crosses the membrane as a helical span at residues 999–1019; the sequence is IIKVSRAAIVFPMMVLALVFV. The Cytoplasmic portion of the chain corresponds to 1020–1118; sequence RKLMDLLFTK…SSFPSKSSPS (99 aa). Residues Ser1057 and Ser1085 each carry the phosphoserine modification.

Belongs to the anion exchanger (TC 2.A.31) family. Predominantly expressed in the brain.

The protein resides in the basolateral cell membrane. Its subcellular location is the apical cell membrane. It localises to the cell projection. The protein localises to the dendrite. It is found in the axon. The protein resides in the perikaryon. Its subcellular location is the presynapse. It localises to the postsynapse. It catalyses the reaction 2 hydrogencarbonate(out) + chloride(in) + Na(+)(out) = 2 hydrogencarbonate(in) + chloride(out) + Na(+)(in). Sodium/bicarbonate cotransporter which plays an important role in regulating intracellular pH. Has been shown to act as a sodium/bicarbonate cotransporter in exchange for intracellular chloride. Has also been shown to act as a sodium/biocarbonate cotransporter which does not couple net influx of bicarbonate to net efflux of chloride, with the observed chloride efflux being due to chloride self-exchange. Controls neuronal pH and may contribute to the secretion of cerebrospinal fluid. Acting on presynaptic intracellular pH, it promotes GABA release, reduces the excitability of CA1 pyramidal neurons, and modulates short-term synaptic plasticity. Required in retinal cells to maintain normal pH which is necessary for normal vision. In the kidney, likely to mediate bicarbonate reclamation in the apical membrane of the proximal tubules. The polypeptide is Sodium-driven chloride bicarbonate exchanger (Homo sapiens (Human)).